Here is a 133-residue protein sequence, read N- to C-terminus: MSNHDPISDMLTRIRNASQKKHTSTAIPASKMSLSIAKVLQKEGFITDINEEGEGYKSQIVLGLKYSGKNKFPTIRSMQRVSKPGLRVYKNTKGLPKVLGGLGVAIVSTSKGVMSDRDARKQGIGGEVLCYVY.

It belongs to the universal ribosomal protein uS8 family. As to quaternary structure, part of the 30S ribosomal subunit. Contacts proteins S5 and S12.

One of the primary rRNA binding proteins, it binds directly to 16S rRNA central domain where it helps coordinate assembly of the platform of the 30S subunit. The chain is Small ribosomal subunit protein uS8 from Prochlorococcus marinus subsp. pastoris (strain CCMP1986 / NIES-2087 / MED4).